The sequence spans 874 residues: Isopimaradiene synthase, chloroplastic (874 aa).

A compositionally biased stretch (polar residues) spans 1 to 12 (MALPSSSLSSRI). A disordered region spans residues 1 to 20 (MALPSSSLSSRIPTGPHPLT). The N-terminal 37 residues, 1–37 (MALPSSSLSSRIPTGPHPLTHTQCIPHFSTTINAGIS), are a transit peptide targeting the chloroplast. Mg(2+)-binding residues include D407, D409, D626, D630, N770, and E778. Positions 407–410 (DIDD) match the DXDD motif motif. The short motif at 626–630 (DDLYD) is the DDXXD motif element.

It belongs to the terpene synthase family. Tpsd subfamily. Requires Mg(2+) as cofactor. The cofactor is Mn(2+).

The protein localises to the plastid. It localises to the chloroplast. It catalyses the reaction (+)-copalyl diphosphate = isopimara-8(14),15-diene + diphosphate. It participates in terpene metabolism; oleoresin biosynthesis. In terms of biological role, terpene synthase (TPS) involved in the biosynthesis of diterpene natural products included in conifer oleoresin secretions and volatile emissions; these compounds contribute to biotic and abiotic stress defense against herbivores and pathogens. Catalyzes the conversion of (+)-copalyl diphosphate ((+)-CPP) to isopimaradiene. This chain is Isopimaradiene synthase, chloroplastic, found in Picea sitchensis (Sitka spruce).